Reading from the N-terminus, the 87-residue chain is Small ribosomal subunit protein uS17 (87 aa).

This sequence belongs to the universal ribosomal protein uS17 family. As to quaternary structure, part of the 30S ribosomal subunit.

In terms of biological role, one of the primary rRNA binding proteins, it binds specifically to the 5'-end of 16S ribosomal RNA. The protein is Small ribosomal subunit protein uS17 of Hydrogenovibrio crunogenus (strain DSM 25203 / XCL-2) (Thiomicrospira crunogena).